The sequence spans 341 residues: Paired box protein Pax-9 (341 aa).

Positions 4-130 (AFGEVNQLGG…SSISRILRNK (127 aa)) form a DNA-binding region, paired. The segment at 7-63 (EVNQLGGVFVNGRPLPNAIRLRIVELAQLGIRPCDISRQLRVSHGCVSKILARYNET) is PAI subdomain. Residues 82-130 (TVVKHIRTYKQRDPGIFAWEIRDRLLADGVCDKYNVPSVSSISRILRNK) form an RED subdomain region. The segment at 168–189 (AAAAKVPTPPGVPAIPGSVAMP) is interaction with KDM5B.

As to quaternary structure, interacts with KDM5B.

It is found in the nucleus. In terms of biological role, transcription factor required for normal development of thymus, parathyroid glands, ultimobranchial bodies, teeth, skeletal elements of skull and larynx as well as distal limbs. The sequence is that of Paired box protein Pax-9 (PAX9) from Daubentonia madagascariensis (Aye-aye).